An 860-amino-acid polypeptide reads, in one-letter code: Pentatricopeptide repeat-containing protein At2g40720 (860 aa).

PPR repeat units lie at residues 59 to 93 (SVFT…GWRY), 94 to 124 (DPFI…WSQS), 132 to 166 (DVTV…GVRP), 167 to 203 (DAFS…SLDT), 204 to 234 (DSFL…IEDK), 236 to 270 (NVVL…SVKL), 271 to 305 (VSTS…GLHN), 306 to 340 (DPYV…RLEI), 341 to 371 (WNAM…SVLP), 372 to 406 (DSFT…PIQS), 407 to 437 (TSTI…MEEK), 438 to 472 (DMVA…DDSL), 475 to 509 (DSDI…GLVL), 510 to 540 (NVFV…MSTE), 541 to 575 (NMVA…GIFP), 576 to 610 (DSVS…GIPS), 611 to 641 (DTHL…MQHK), 642 to 676 (SLIT…GESP), 677 to 707 (DDVT…MKQD), and 713 to 743 (NMEH…MPIE). Residues 748 to 823 (IWLCLLSASR…QPGCSWIEVS (76 aa)) are type E motif. The type E(+) motif stretch occupies residues 824-854 (DRTNVFFSGGSSSPMKAEIFNVLNRLKSNMV).

It belongs to the PPR family. PCMP-E subfamily.

The protein is Pentatricopeptide repeat-containing protein At2g40720 (PCMP-E26) of Arabidopsis thaliana (Mouse-ear cress).